Consider the following 300-residue polypeptide: 3-dehydrocarnitine:acetyl-CoA trimethylamine transferase (300 aa).

Zn(2+)-binding residues include histidine 51, histidine 53, and glutamate 254.

This sequence belongs to the BKACE family. In terms of assembly, homotetramer. The cofactor is Zn(2+).

It catalyses the reaction 3-dehydrocarnitine + acetyl-CoA = N,N,N-trimethylglycyl-CoA + acetoacetate. It functions in the pathway amine and polyamine metabolism; carnitine metabolism. Catalyzes the condensation of dehydrocarnitine and acetyl-CoA, forming acetoacetate and betainyl-CoA (N,N,N-trimethylglycyl-CoA). Is involved in a L-carnitine degradation pathway that allows R.meliloti to grow on L-carnitine as the sole source of carbon and nitrogen. This is 3-dehydrocarnitine:acetyl-CoA trimethylamine transferase from Rhizobium meliloti (strain 1021) (Ensifer meliloti).